The following is a 509-amino-acid chain: Photosystem II CP47 reaction center protein (509 aa).

Transmembrane regions (helical) follow at residues 21 to 36, 101 to 115, 140 to 156, 203 to 218, 237 to 252, and 457 to 472; these read AVHLMHTALVAGWAGS, IVLSGMLFLAAIWHW, GIHLLLSSLLCFGFGAF, IAAGTVGILAGVFHLT, VLSSSISAVFFSAFIT, and NFALIFFFGHLWHGSR.

It belongs to the PsbB/PsbC family. PsbB subfamily. PSII is composed of 1 copy each of membrane proteins PsbA, PsbB, PsbC, PsbD, PsbE, PsbF, PsbH, PsbI, PsbJ, PsbK, PsbL, PsbM, PsbT, PsbX, PsbY, PsbZ, Psb30/Ycf12, at least 3 peripheral proteins of the oxygen-evolving complex and a large number of cofactors. It forms dimeric complexes. Binds multiple chlorophylls. PSII binds additional chlorophylls, carotenoids and specific lipids. is required as a cofactor.

It is found in the plastid. The protein localises to the chloroplast thylakoid membrane. Its function is as follows. One of the components of the core complex of photosystem II (PSII). It binds chlorophyll and helps catalyze the primary light-induced photochemical processes of PSII. PSII is a light-driven water:plastoquinone oxidoreductase, using light energy to abstract electrons from H(2)O, generating O(2) and a proton gradient subsequently used for ATP formation. This chain is Photosystem II CP47 reaction center protein, found in Porphyra purpurea (Red seaweed).